Consider the following 214-residue polypeptide: Cell division protein SepF (214 aa).

The segment at 25–51 is disordered; the sequence is EDDDRGARAGGYSRRPREDRFEEEAYG.

The protein belongs to the SepF family. In terms of assembly, homodimer. Interacts with FtsZ.

It is found in the cytoplasm. Functionally, cell division protein that is part of the divisome complex and is recruited early to the Z-ring. Probably stimulates Z-ring formation, perhaps through the cross-linking of FtsZ protofilaments. Its function overlaps with FtsA. The chain is Cell division protein SepF from Mycolicibacterium smegmatis (strain ATCC 700084 / mc(2)155) (Mycobacterium smegmatis).